The sequence spans 98 residues: MSLTYMNMLMAFTTSLLGLLMYRSHMMSSLLCLEGMMLSLFVMVTITILNMKFTLASMMPIILLVFAACEAALGLSLLVMVSTIYGMDYVQNLNLLKC.

3 helical membrane passes run 1 to 21 (MSLTYMNMLMAFTTSLLGLLM), 29 to 49 (SLLCLEGMMLSLFVMVTITIL), and 61 to 81 (IILLVFAACEAALGLSLLVMV).

The protein belongs to the complex I subunit 4L family. As to quaternary structure, core subunit of respiratory chain NADH dehydrogenase (Complex I) which is composed of 45 different subunits.

The protein localises to the mitochondrion inner membrane. It carries out the reaction a ubiquinone + NADH + 5 H(+)(in) = a ubiquinol + NAD(+) + 4 H(+)(out). Its function is as follows. Core subunit of the mitochondrial membrane respiratory chain NADH dehydrogenase (Complex I) which catalyzes electron transfer from NADH through the respiratory chain, using ubiquinone as an electron acceptor. Part of the enzyme membrane arm which is embedded in the lipid bilayer and involved in proton translocation. In Ectophylla alba (White bat), this protein is NADH-ubiquinone oxidoreductase chain 4L (MT-ND4L).